Reading from the N-terminus, the 256-residue chain is MFDWTGKNVVYVGSFSGIGWQMMMQLMQKDIKMMGIMHRMENVEMMKKLQAINPSVKVVFMQMNLMEKMSIEQAMKKMGQMMGHIDVMINGEGVLLDKDVETTMGMNLTGMIQSTMMAMPYMDKTQMGMGGMVVNMSSVYGLEPAPAFAVYAAAMHGILGFTRSMGDKMIYQKTGVMFMAMCPGLTNSEMIMNLRDNVTWHHSESMVEAIESAKRQMPEEAAMQMIHAMEMMKNGSMWIVSMGQLKEVTPTMHWQM.

10–34 (VYVGSFSGIGWQMMMQLMQKDIKMM) serves as a coordination point for NAD(+). Ser-138 contributes to the substrate binding site. Tyr-151 acts as the Proton acceptor in catalysis.

The protein belongs to the short-chain dehydrogenases/reductases (SDR) family.

The protein is Fat body protein 2 (Fbp2) of Drosophila melanogaster (Fruit fly).